Reading from the N-terminus, the 281-residue chain is Foldase protein PrsA (281 aa).

An N-terminal signal peptide occupies residues 1–18; sequence MKKWMMAAAVVSLMALSA. Residue C19 is the site of N-palmitoyl cysteine attachment. Residue C19 is the site of S-diacylglycerol cysteine attachment. Residues 133–223 form the PpiC domain; that stretch reads KPKIRASHIL…YGYHIIKVTD (91 aa).

Belongs to the PrsA family.

The protein localises to the cell membrane. The enzyme catalyses [protein]-peptidylproline (omega=180) = [protein]-peptidylproline (omega=0). Functionally, plays a major role in protein secretion by helping the post-translocational extracellular folding of several secreted proteins. The protein is Foldase protein PrsA of Geobacillus kaustophilus (strain HTA426).